The primary structure comprises 1687 residues: Vitellogenin-2 (1687 aa).

A signal peptide spans 1-15 (MRVLVLALTVALVAG). A Vitellogenin domain is found at 24–663 (FAPGKTYEYK…DAATVLPKNI (640 aa)). 6 N-linked (GlcNAc...) asparagine glycosylation sites follow: N941, N945, N954, N1004, N1019, and N1083. The tract at residues 1081-1174 (LKNSTKASSS…SSSSSKTKWQ (94 aa)) is disordered. A compositionally biased stretch (low complexity) spans 1088-1127 (SSSSSGSSRSSRSRSSSSSSSSSSSSSSRSSSSSSRSSSS). Residue N1142 is glycosylated (N-linked (GlcNAc...) asparagine). Residues 1148-1169 (SSSSSSSSSSSSSSSSSSSSSS) are compositionally biased toward low complexity. Residues N1179, N1257, N1292, N1342, N1361, N1366, and N1390 are each glycosylated (N-linked (GlcNAc...) asparagine). In terms of domain architecture, VWFD spans 1417–1593 (AECTVVEDTV…SWVLPAKSCR (177 aa)). Disulfide bonds link C1419/C1556 and C1442/C1592. N1577 and N1655 each carry an N-linked (GlcNAc...) asparagine glycan.

Post-translationally, phosvitin, an egg yolk storage protein, is one of the most highly phosphorylated (10%) proteins in nature. As to expression, produced by the liver, secreted into the blood and then sequestered by receptor mediated endocytosis into growing oocytes, where it is generally cleaved, giving rise to the respective yolk components lipovitellins and phosvitin.

Functionally, precursor of the egg-yolk proteins that are sources of nutrients during early development of oviparous organisms. This is Vitellogenin-2 from Fundulus heteroclitus (Killifish).